The chain runs to 851 residues: Venom phosphodiesterase (851 aa).

The first 23 residues, 1–23, serve as a signal peptide directing secretion; sequence MIQQKVLFISLVAVALGLGLGLG. 2 SMB domains span residues 30-73 and 74-118; these read PQVS…VLPT and QSWS…GETS. Disulfide bonds link Cys34–Cys38, Cys34–Cys51, Cys38–Cys69, Cys49–Cys51, Cys49–Cys62, Cys55–Cys61, Cys62–Cys69, Cys78–Cys83, Cys78–Cys95, Cys83–Cys113, Cys93–Cys95, Cys93–Cys106, Cys99–Cys105, Cys106–Cys113, Cys124–Cys170, and Cys132–Cys344. N-linked (GlcNAc...) asparagine glycosylation occurs at Asn39. The short motif at 58–60 is the Cell attachment site element; that stretch reads RQA. Residues Asp147 and Thr185 each coordinate a divalent metal cation. Residue Thr185 is the AMP-threonine intermediate of the active site. N-linked (GlcNAc...) asparagine glycans are attached at residues Asn216, Asn259, and Asn270. AMP is bound at residue Lys271. A divalent metal cation contacts are provided by Asp305, His309, Asp352, and His353. His309 is an AMP binding site. 6 cysteine pairs are disulfide-bonded: Cys360–Cys457, Cys408–Cys793, Cys541–Cys599, Cys554–Cys654, Cys556–Cys639, and Cys762–Cys772. Asn405 is a glycosylation site (N-linked (GlcNAc...) asparagine). His462 contributes to the a divalent metal cation binding site. N-linked (GlcNAc...) asparagine glycans are attached at residues Asn512, Asn594, and Asn745.

Belongs to the nucleotide pyrophosphatase/phosphodiesterase family. Monomer cleaved in two subunits; disulfide-linked. Is synthesized as a single-chain protein and is subsequently cleaved to form a two-subunit protein held together with disulfide bonds. Requires a divalent metal cation as cofactor. In terms of tissue distribution, expressed by venom gland.

It localises to the secreted. It carries out the reaction ADP + H2O = AMP + phosphate + H(+). Functionally, hydrolyzes ADP with high activity. Shows weak or no activity on 5'-AMP, 5'-GMP, 3'-AMP, ATP, cAMP, and cGMP. Is devoid of monophosphatase and proteinase activities. Dose-dependently inhibits platelet aggregation induced by ADP (IC(50)=0.99 uM) and collagen (IC(50)=1.4 uM). This Macrovipera lebetinus (Levantine viper) protein is Venom phosphodiesterase.